Reading from the N-terminus, the 333-residue chain is Electron transfer flavoprotein subunit alpha, mitochondrial (333 aa).

A mitochondrion-targeting transit peptide spans 1–19 (MFRAAAPGQLRRATSLLRF). The domain I stretch occupies residues 20-204 (QSTLVIAEHA…GISEWLDQKL (185 aa)). An N6-acetyllysine; alternate modification is found at Lys59. At Lys59 the chain carries N6-succinyllysine; alternate. An N6-acetyllysine modification is found at Lys62. N6-acetyllysine; alternate is present on Lys69. Lys69 carries the N6-succinyllysine; alternate modification. The residue at position 75 (Lys75) is an N6-acetyllysine. At Lys85 the chain carries N6-acetyllysine; alternate. Lys85 is modified (N6-succinyllysine; alternate). A Phosphothreonine modification is found at Thr93. Lys101 and Lys139 each carry N6-acetyllysine. The residue at position 140 (Ser140) is a Phosphoserine. Lys158 carries the N6-acetyllysine; alternate modification. The residue at position 158 (Lys158) is an N6-succinyllysine; alternate. Lys164 bears the N6-acetyllysine mark. Lys187 is modified (N6-succinyllysine). N6-acetyllysine; alternate is present on Lys203. Position 203 is an N6-succinyllysine; alternate (Lys203). Residues 205–333 (TKSDRPELTG…PEMTELLKKK (129 aa)) form a domain II region. Lys216 carries the post-translational modification N6-succinyllysine. Position 223 (Arg223) interacts with FAD. N6-acetyllysine; alternate occurs at positions 226 and 232. N6-succinyllysine; alternate occurs at positions 226 and 232. Residues Ser248, 263 to 266 (VGQT), 281 to 286 (SGAIQH), and Asn300 contribute to the FAD site. The residue at position 301 (Lys301) is an N6-succinyllysine. 318–319 (DL) serves as a coordination point for FAD.

It belongs to the ETF alpha-subunit/FixB family. In terms of assembly, heterodimer composed of ETFA and ETFB. Identified in a complex that contains ETFA, ETFB and ETFRF1. Interaction with ETFRF1 promotes dissociation of the bound FAD and loss of electron transfer activity. Interacts with TASOR. Requires FAD as cofactor.

It is found in the mitochondrion matrix. Functionally, heterodimeric electron transfer flavoprotein that accepts electrons from several mitochondrial dehydrogenases, including acyl-CoA dehydrogenases, glutaryl-CoA and sarcosine dehydrogenase. It transfers the electrons to the main mitochondrial respiratory chain via ETF-ubiquinone oxidoreductase (ETF dehydrogenase). Required for normal mitochondrial fatty acid oxidation and normal amino acid metabolism. In Bos taurus (Bovine), this protein is Electron transfer flavoprotein subunit alpha, mitochondrial (ETFA).